A 472-amino-acid polypeptide reads, in one-letter code: NALCN channel auxiliary factor 2 (472 aa).

Residues 47-67 (LASLLFFTVLLADHLWLCAGA) traverse the membrane as a helical segment. The tract at residues 77–114 (AMRPPWGAGRERQPVPPRAVLPLPPPPPGEPSAPPGTC) is disordered. Over residues 90–110 (PVPPRAVLPLPPPPPGEPSAP) the composition is skewed to pro residues. Asn120 and Asn193 each carry an N-linked (GlcNAc...) asparagine glycan. The helical transmembrane segment at 433–453 (LCVLVLMLLHTVVSFSSNQGG) threads the bilayer.

Belongs to the NALF family.

It localises to the membrane. Probable component of the NALCN channel complex, a channel that regulates the resting membrane potential and controls neuronal excitability. This chain is NALCN channel auxiliary factor 2, found in Homo sapiens (Human).